A 511-amino-acid polypeptide reads, in one-letter code: Bifunctional purine biosynthesis protein PurH (511 aa).

The MGS-like domain maps to 1 to 145 (MKKRALVSVS…KNHKFVSVIV (145 aa)).

It belongs to the PurH family.

The catalysed reaction is (6R)-10-formyltetrahydrofolate + 5-amino-1-(5-phospho-beta-D-ribosyl)imidazole-4-carboxamide = 5-formamido-1-(5-phospho-D-ribosyl)imidazole-4-carboxamide + (6S)-5,6,7,8-tetrahydrofolate. It carries out the reaction IMP + H2O = 5-formamido-1-(5-phospho-D-ribosyl)imidazole-4-carboxamide. It functions in the pathway purine metabolism; IMP biosynthesis via de novo pathway; 5-formamido-1-(5-phospho-D-ribosyl)imidazole-4-carboxamide from 5-amino-1-(5-phospho-D-ribosyl)imidazole-4-carboxamide (10-formyl THF route): step 1/1. Its pathway is purine metabolism; IMP biosynthesis via de novo pathway; IMP from 5-formamido-1-(5-phospho-D-ribosyl)imidazole-4-carboxamide: step 1/1. The sequence is that of Bifunctional purine biosynthesis protein PurH from Bacillus anthracis (strain A0248).